Consider the following 235-residue polypeptide: Phosphoribosylaminoimidazole-succinocarboxamide synthase (235 aa).

This sequence belongs to the SAICAR synthetase family.

The catalysed reaction is 5-amino-1-(5-phospho-D-ribosyl)imidazole-4-carboxylate + L-aspartate + ATP = (2S)-2-[5-amino-1-(5-phospho-beta-D-ribosyl)imidazole-4-carboxamido]succinate + ADP + phosphate + 2 H(+). It functions in the pathway purine metabolism; IMP biosynthesis via de novo pathway; 5-amino-1-(5-phospho-D-ribosyl)imidazole-4-carboxamide from 5-amino-1-(5-phospho-D-ribosyl)imidazole-4-carboxylate: step 1/2. The chain is Phosphoribosylaminoimidazole-succinocarboxamide synthase from Clostridium novyi (strain NT).